We begin with the raw amino-acid sequence, 159 residues long: uncharacterized protein (159 aa).

The region spanning 7-151 is the N-acetyltransferase domain; that stretch reads LLINYKTLEE…NPLVWHPASE (145 aa).

This is an uncharacterized protein from Bacillus licheniformis (strain ATCC 14580 / DSM 13 / JCM 2505 / CCUG 7422 / NBRC 12200 / NCIMB 9375 / NCTC 10341 / NRRL NRS-1264 / Gibson 46).